Here is a 276-residue protein sequence, read N- to C-terminus: NADPH-dependent 7-cyano-7-deazaguanine reductase (276 aa).

A substrate-binding site is contributed by 83 to 85 (IES). Residue 85–86 (SK) coordinates NADPH. C184 functions as the Thioimide intermediate in the catalytic mechanism. The active-site Proton donor is the D191. Residue 223 to 224 (HE) participates in substrate binding. 252–253 (RG) is a binding site for NADPH.

It belongs to the GTP cyclohydrolase I family. QueF type 2 subfamily. In terms of assembly, homodimer.

The protein localises to the cytoplasm. The catalysed reaction is 7-aminomethyl-7-carbaguanine + 2 NADP(+) = 7-cyano-7-deazaguanine + 2 NADPH + 3 H(+). It functions in the pathway tRNA modification; tRNA-queuosine biosynthesis. Its function is as follows. Catalyzes the NADPH-dependent reduction of 7-cyano-7-deazaguanine (preQ0) to 7-aminomethyl-7-deazaguanine (preQ1). The protein is NADPH-dependent 7-cyano-7-deazaguanine reductase of Pseudomonas paraeruginosa (strain DSM 24068 / PA7) (Pseudomonas aeruginosa (strain PA7)).